Here is a 189-residue protein sequence, read N- to C-terminus: MTEYKLVVVGAGGVGKSALTIQLIQNHFVDEYDPTIEDSYRKQVVIDGETCLLDILDTAGQEEYSAMRDQYMRTGEGFLCVFAINNSKSFADINLYREQIKRVKDSDDVPMVLVGNKCDLPTRTVDTKQAQELAKSYGIPFIETSAKTRQGVEDAFYTLVREIRQYRMKKLNSNEDGNQGCMGLSCIVM.

10-17 (GAGGVGKS) provides a ligand contact to GTP. The Effector region motif lies at 32-40 (YDPTIEDSY). GTP contacts are provided by residues 57 to 61 (DTAGQ) and 116 to 119 (NKCD). The interval 166-185 (YRMKKLNSNEDGNQGCMGLS) is hypervariable region. Residue cysteine 181 is the site of S-palmitoyl cysteine attachment. Cysteine 186 is lipidated: S-farnesyl cysteine. The propeptide at 187–189 (IVM) is removed in mature form.

Belongs to the small GTPase superfamily. Ras family. Palmitoylated by the ZDHHC9-GOLGA7 complex. Depalmitoylated by ABHD17A, ABHD17B and ABHD17C. A continuous cycle of de- and re-palmitoylation regulates rapid exchange between plasma membrane and Golgi.

It localises to the cell membrane. It is found in the golgi apparatus membrane. The catalysed reaction is GTP + H2O = GDP + phosphate + H(+). Alternates between an inactive form bound to GDP and an active form bound to GTP. Activated by a guanine nucleotide-exchange factor (GEF) and inactivated by a GTPase-activating protein (GAP). Functionally, ras proteins bind GDP/GTP and possess intrinsic GTPase activity. This is GTPase NRas (NRAS) from Gallus gallus (Chicken).